The following is a 251-amino-acid chain: Protein FAM216A (251 aa).

The interval 1–41 is disordered; the sequence is MPSRWPGVAGPPALARTEGGEGSAGHSYPQNSKGTGEQHKA.

The protein belongs to the FAM216 family.

The protein is Protein FAM216A (Fam216a) of Mus musculus (Mouse).